A 429-amino-acid chain; its full sequence is Probable E3 ubiquitin-protein ligase makorin-1 (429 aa).

3 C3H1-type zinc fingers span residues 18–45, 48–75, and 153–180; these read WTKH…HDLT, KPAA…HCKP, and ELRK…HGDV. The segment at 181-208 is makorin-type Cys-His; sequence CDMCGLQVLHPTDSSQRSEHTKACIEAH. The segment at 226 to 280 adopts an RING-type zinc-finger fold; it reads CGVCMEVVFEKANPSERRFGILSNCSHCYCLKCIRKWRSAKQFESKIIKSCPECR. The C3H1-type 4 zinc finger occupies 309-338; that stretch reads GMGRKPCRYFDEGRGICPFGANCFYKHAFP. The tract at residues 343–362 is disordered; it reads EEAQPQRRQTGSSSRNRNSR. Over residues 348–358 the composition is skewed to low complexity; it reads QRRQTGSSSRN.

The catalysed reaction is S-ubiquitinyl-[E2 ubiquitin-conjugating enzyme]-L-cysteine + [acceptor protein]-L-lysine = [E2 ubiquitin-conjugating enzyme]-L-cysteine + N(6)-ubiquitinyl-[acceptor protein]-L-lysine.. Its pathway is protein modification; protein ubiquitination. E3 ubiquitin ligase catalyzing the covalent attachment of ubiquitin moieties onto substrate proteins. The polypeptide is Probable E3 ubiquitin-protein ligase makorin-1 (Takifugu rubripes (Japanese pufferfish)).